Reading from the N-terminus, the 412-residue chain is Transcription termination factor 3, mitochondrial (412 aa).

The N-terminal 67 residues, 1–67, are a transit peptide targeting the mitochondrion; it reads MALLAQQLPR…IKTYRTLFWN (67 aa).

The protein belongs to the mTERF family.

The protein localises to the mitochondrion. Functionally, binds promoter DNA and regulates initiation of transcription. Required for normal mitochondrial transcription and translation, and for normal assembly of mitochondrial respiratory complexes. Required for normal mitochondrial function. Maintains 16S rRNA levels and functions in mitochondrial ribosome assembly by regulating the biogenesis of the 39S ribosomal subunit. This is Transcription termination factor 3, mitochondrial (Mterf3) from Mus musculus (Mouse).